The sequence spans 189 residues: Ras-like protein 1 (189 aa).

10–17 is a binding site for GTP; that stretch reads GGGGVGKS. Residues 32–40 carry the Effector region motif; the sequence is YDPTIEDSY. GTP contacts are provided by residues 57–61 and 116–119; these read DTAGQ and NKCD. At cysteine 186 the chain carries Cysteine methyl ester. The S-geranylgeranyl cysteine moiety is linked to residue cysteine 186. The propeptide at 187-189 is removed in mature form; it reads LLL.

The protein belongs to the small GTPase superfamily. Ras family.

It is found in the cell membrane. It catalyses the reaction GTP + H2O = GDP + phosphate + H(+). Ras proteins bind GDP/GTP and possess intrinsic GTPase activity. This is Ras-like protein 1 (RAS1) from Physarum polycephalum (Slime mold).